We begin with the raw amino-acid sequence, 317 residues long: Metaxin-1 (317 aa).

Glycyl lysine isopeptide (Lys-Gly) (interchain with G-Cter in ubiquitin) cross-links involve residues Lys-38, Lys-41, and Lys-78. Residues 164 to 184 (EELEKELYQEAQECLTLLSQR) form a helical membrane-spanning segment.

Belongs to the metaxin family. Interacts with MTX2/metaxin-2. Associates with the mitochondrial contact site and cristae organizing system (MICOS) complex, composed of at least MICOS10/MIC10, CHCHD3/MIC19, CHCHD6/MIC25, APOOL/MIC27, IMMT/MIC60, APOO/MIC23/MIC26 and QIL1/MIC13. This complex was also known under the names MINOS or MitOS complex. The MICOS complex associates with mitochondrial outer membrane proteins SAMM50, MTX1 and MTX2 (together described as components of the mitochondrial outer membrane sorting assembly machinery (SAM) complex) and DNAJC11, mitochondrial inner membrane protein TMEM11 and with HSPA9. The MICOS and SAM complexes together with DNAJC11 are part of a large protein complex spanning both membranes termed the mitochondrial intermembrane space bridging (MIB) complex. Interacts with ARMC1. In terms of processing, ubiquitinated by PRKN during mitophagy, leading to its degradation and enhancement of mitophagy. Deubiquitinated by USP30.

The protein localises to the mitochondrion outer membrane. Its function is as follows. Involved in transport of proteins into the mitochondrion. Essential for embryonic development. This chain is Metaxin-1 (MTX1), found in Bos taurus (Bovine).